The following is a 238-amino-acid chain: 2-C-methyl-D-erythritol 4-phosphate cytidylyltransferase (238 aa).

It belongs to the IspD/TarI cytidylyltransferase family. IspD subfamily.

It catalyses the reaction 2-C-methyl-D-erythritol 4-phosphate + CTP + H(+) = 4-CDP-2-C-methyl-D-erythritol + diphosphate. The protein operates within isoprenoid biosynthesis; isopentenyl diphosphate biosynthesis via DXP pathway; isopentenyl diphosphate from 1-deoxy-D-xylulose 5-phosphate: step 2/6. Its function is as follows. Catalyzes the formation of 4-diphosphocytidyl-2-C-methyl-D-erythritol from CTP and 2-C-methyl-D-erythritol 4-phosphate (MEP). In Shewanella amazonensis (strain ATCC BAA-1098 / SB2B), this protein is 2-C-methyl-D-erythritol 4-phosphate cytidylyltransferase.